We begin with the raw amino-acid sequence, 254 residues long: Leucyl/phenylalanyl-tRNA--protein transferase (254 aa).

This sequence belongs to the L/F-transferase family.

The protein localises to the cytoplasm. The enzyme catalyses N-terminal L-lysyl-[protein] + L-leucyl-tRNA(Leu) = N-terminal L-leucyl-L-lysyl-[protein] + tRNA(Leu) + H(+). It catalyses the reaction N-terminal L-arginyl-[protein] + L-leucyl-tRNA(Leu) = N-terminal L-leucyl-L-arginyl-[protein] + tRNA(Leu) + H(+). It carries out the reaction L-phenylalanyl-tRNA(Phe) + an N-terminal L-alpha-aminoacyl-[protein] = an N-terminal L-phenylalanyl-L-alpha-aminoacyl-[protein] + tRNA(Phe). Functions in the N-end rule pathway of protein degradation where it conjugates Leu, Phe and, less efficiently, Met from aminoacyl-tRNAs to the N-termini of proteins containing an N-terminal arginine or lysine. The chain is Leucyl/phenylalanyl-tRNA--protein transferase from Burkholderia vietnamiensis (strain G4 / LMG 22486) (Burkholderia cepacia (strain R1808)).